The following is a 130-amino-acid chain: Small ribosomal subunit protein uS9 (130 aa).

It belongs to the universal ribosomal protein uS9 family.

The protein is Small ribosomal subunit protein uS9 of Hahella chejuensis (strain KCTC 2396).